We begin with the raw amino-acid sequence, 150 residues long: D-aminoacyl-tRNA deacylase (150 aa).

The Gly-cisPro motif, important for rejection of L-amino acids motif lies at 138-139; that stretch reads GP.

The protein belongs to the DTD family. Homodimer.

The protein resides in the cytoplasm. It catalyses the reaction glycyl-tRNA(Ala) + H2O = tRNA(Ala) + glycine + H(+). The catalysed reaction is a D-aminoacyl-tRNA + H2O = a tRNA + a D-alpha-amino acid + H(+). Its function is as follows. An aminoacyl-tRNA editing enzyme that deacylates mischarged D-aminoacyl-tRNAs. Also deacylates mischarged glycyl-tRNA(Ala), protecting cells against glycine mischarging by AlaRS. Acts via tRNA-based rather than protein-based catalysis; rejects L-amino acids rather than detecting D-amino acids in the active site. By recycling D-aminoacyl-tRNA to D-amino acids and free tRNA molecules, this enzyme counteracts the toxicity associated with the formation of D-aminoacyl-tRNA entities in vivo and helps enforce protein L-homochirality. This chain is D-aminoacyl-tRNA deacylase, found in Christiangramia forsetii (strain DSM 17595 / CGMCC 1.15422 / KT0803) (Gramella forsetii).